We begin with the raw amino-acid sequence, 485 residues long: UDP-glycosyltransferase 71B2 (485 aa).

UDP-alpha-D-glucose-binding positions include Ser287, 354-356 (APQ), 371-379 (HCGWNSTLE), and 393-396 (YAEQ).

It belongs to the UDP-glycosyltransferase family.

Its function is as follows. Glucosyltransferase that glucosylates the cell wall inhibitor hypostatin in vivo to form a bioactive glucoside. The protein is UDP-glycosyltransferase 71B2 (UGT71B2) of Arabidopsis thaliana (Mouse-ear cress).